Consider the following 487-residue polypeptide: Betaine aldehyde dehydrogenase (487 aa).

K(+)-binding residues include Ile-27 and Asp-93. NAD(+) is bound at residue 149–151 (GAW). The active-site Charge relay system is Lys-161. Residues 175 to 178 (KPSE) and 228 to 231 (SVPT) each bind NAD(+). Leu-243 is a binding site for K(+). Glu-249 serves as the catalytic Proton acceptor. Positions 251, 283, and 384 each coordinate NAD(+). The active-site Nucleophile is the Cys-283. At Cys-283 the chain carries Cysteine sulfenic acid (-SOH). 2 residues coordinate K(+): Lys-454 and Gly-457. Residue Glu-461 is the Charge relay system of the active site.

The protein belongs to the aldehyde dehydrogenase family. Dimer of dimers. It depends on K(+) as a cofactor.

The catalysed reaction is betaine aldehyde + NAD(+) + H2O = glycine betaine + NADH + 2 H(+). It participates in amine and polyamine biosynthesis; betaine biosynthesis via choline pathway; betaine from betaine aldehyde: step 1/1. In terms of biological role, involved in the biosynthesis of the osmoprotectant glycine betaine. Catalyzes the irreversible oxidation of betaine aldehyde to the corresponding acid. This chain is Betaine aldehyde dehydrogenase, found in Brucella canis (strain ATCC 23365 / NCTC 10854 / RM-666).